The chain runs to 234 residues: Small ribosomal subunit protein uS3 (234 aa).

Residues valine 39–arginine 107 enclose the KH type-2 domain. The tract at residues glutamate 212–serine 234 is disordered.

This sequence belongs to the universal ribosomal protein uS3 family. Part of the 30S ribosomal subunit. Forms a tight complex with proteins S10 and S14.

Its function is as follows. Binds the lower part of the 30S subunit head. Binds mRNA in the 70S ribosome, positioning it for translation. The polypeptide is Small ribosomal subunit protein uS3 (Thiobacillus denitrificans (strain ATCC 25259 / T1)).